The following is a 576-amino-acid chain: DM7 family protein GD16138 (576 aa).

The interval 454-481 (FPELEPDSEPEPEPEPQTEDEGEDEGDK) is disordered. The span at 457 to 478 (LEPDSEPEPEPEPQTEDEGEDE) shows a compositional bias: acidic residues.

Belongs to the DM7 family.

The polypeptide is DM7 family protein GD16138 (Drosophila simulans (Fruit fly)).